We begin with the raw amino-acid sequence, 216 residues long: Translation initiation factor 6 (216 aa).

Belongs to the eIF-6 family.

Binds to the 50S ribosomal subunit and prevents its association with the 30S ribosomal subunit to form the 70S initiation complex. This is Translation initiation factor 6 from Thermoplasma acidophilum (strain ATCC 25905 / DSM 1728 / JCM 9062 / NBRC 15155 / AMRC-C165).